A 259-amino-acid chain; its full sequence is Deoxyribose-phosphate aldolase (259 aa).

Asp-102 (proton donor/acceptor) is an active-site residue. Catalysis depends on Lys-167, which acts as the Schiff-base intermediate with acetaldehyde. The active-site Proton donor/acceptor is the Lys-201.

The protein belongs to the DeoC/FbaB aldolase family. DeoC type 2 subfamily.

The protein localises to the cytoplasm. It carries out the reaction 2-deoxy-D-ribose 5-phosphate = D-glyceraldehyde 3-phosphate + acetaldehyde. It functions in the pathway carbohydrate degradation; 2-deoxy-D-ribose 1-phosphate degradation; D-glyceraldehyde 3-phosphate and acetaldehyde from 2-deoxy-alpha-D-ribose 1-phosphate: step 2/2. Functionally, catalyzes a reversible aldol reaction between acetaldehyde and D-glyceraldehyde 3-phosphate to generate 2-deoxy-D-ribose 5-phosphate. The protein is Deoxyribose-phosphate aldolase of Enterobacter sp. (strain 638).